The primary structure comprises 208 residues: LexA repressor (208 aa).

The H-T-H motif DNA-binding region spans 29–49 (IREIGDSLNINSTSTVHNNIL). Catalysis depends on for autocatalytic cleavage activity residues Ser-131 and Lys-168.

The protein belongs to the peptidase S24 family. As to quaternary structure, homodimer.

The catalysed reaction is Hydrolysis of Ala-|-Gly bond in repressor LexA.. Functionally, represses a number of genes involved in the response to DNA damage (SOS response), including recA and lexA. In the presence of single-stranded DNA, RecA interacts with LexA causing an autocatalytic cleavage which disrupts the DNA-binding part of LexA, leading to derepression of the SOS regulon and eventually DNA repair. This Finegoldia magna (strain ATCC 29328 / DSM 20472 / WAL 2508) (Peptostreptococcus magnus) protein is LexA repressor.